The sequence spans 385 residues: Isocitrate dehydrogenase [NAD] subunit beta, mitochondrial (385 aa).

The transit peptide at 1 to 33 (MAALSRVRWLTRALVAAPNPGAWRSLCTSTVAQ) directs the protein to the mitochondrion. At Lys-199 the chain carries N6-acetyllysine.

Belongs to the isocitrate and isopropylmalate dehydrogenases family. As to quaternary structure, heterooligomer of subunits alpha (IDH3A), beta (IDH3B), and gamma (IDH3G) in the apparent ratio of 2:1:1. The heterodimer containing one IDH3A and one IDH3B subunit and the heterodimer containing one IDH3A and one IDH3G subunit assemble into a heterotetramer (which contains two subunits of IDH3A, one of IDH3B and one of IDH3G) and further into the heterooctamer. Isoform A is predominant in heart muscle; also found in brain, kidney and liver. Isoform B is present in kidney and liver.

The protein resides in the mitochondrion. With respect to regulation, the heterotetramer and the heterodimer composed of IDH3A and IDH3G subunits can be allosterically activated by citrate (CIT) or/and ADP, and the two activators can act independently or synergistically. The heterodimer composed of IDH3A and IDH3B subunits cannot be allosterically regulated and the allosteric regulation of the heterotetramer is through the IDH3G subunit and not the IDH3B subunit. The IDH3G subunit contains the allosteric site which consists of a CIT-binding site and an ADP-binding site, and the binding of CIT and ADP causes conformational changes at the allosteric site which are transmitted to the active site in the catalytic subunit (IDH3A) through a cascade of conformational changes at the heterodimer interface, leading to stabilization of the isocitrate-binding at the active site and thus activation of the enzyme. ATP can activate the heterotetramer and the heterodimer composed of IDH3A and IDH3G subunits at low concentrations but inhibits their activities at high concentrations, whereas ATP exhibits only inhibitory effect on the heterodimer composed of IDH3A and IDH3B subunits. Functionally, plays a structural role to facilitate the assembly and ensure the full activity of the enzyme catalyzing the decarboxylation of isocitrate (ICT) into alpha-ketoglutarate. The heterodimer composed of the alpha (IDH3A) and beta (IDH3B) subunits and the heterodimer composed of the alpha (IDH3A) and gamma (IDH3G) subunits, have considerable basal activity but the full activity of the heterotetramer (containing two subunits of IDH3A, one of IDH3B and one of IDH3G) requires the assembly and cooperative function of both heterodimers. The chain is Isocitrate dehydrogenase [NAD] subunit beta, mitochondrial (IDH3B) from Bos taurus (Bovine).